We begin with the raw amino-acid sequence, 176 residues long: MDLPGPIHDFLLVFLGSGLLFGSIGVVLFTNPIFSAFSLGFVLVCISLLYILSNSHFVAAAQLLIYVGAITVLIIFAVMFMNDSEYSTDLNRWTVGDGITSLICTTILFSLISTILDTSWYGVIWTTRLNQILEQDLISNSQQIGIHLSTDFFLPFELISIILLVALIGAISVARQ.

5 consecutive transmembrane segments (helical) span residues 10 to 30 (FLLV…VLFT), 32 to 52 (PIFS…LYIL), 61 to 81 (AQLL…VMFM), 95 to 115 (VGDG…ISTI), and 152 to 172 (FFLP…GAIS).

This sequence belongs to the complex I subunit 6 family. In terms of assembly, NDH is composed of at least 16 different subunits, 5 of which are encoded in the nucleus.

The protein localises to the plastid. The protein resides in the chloroplast thylakoid membrane. It carries out the reaction a plastoquinone + NADH + (n+1) H(+)(in) = a plastoquinol + NAD(+) + n H(+)(out). The enzyme catalyses a plastoquinone + NADPH + (n+1) H(+)(in) = a plastoquinol + NADP(+) + n H(+)(out). In terms of biological role, NDH shuttles electrons from NAD(P)H:plastoquinone, via FMN and iron-sulfur (Fe-S) centers, to quinones in the photosynthetic chain and possibly in a chloroplast respiratory chain. The immediate electron acceptor for the enzyme in this species is believed to be plastoquinone. Couples the redox reaction to proton translocation, and thus conserves the redox energy in a proton gradient. The protein is NAD(P)H-quinone oxidoreductase subunit 6, chloroplastic (ndhG) of Aethionema grandiflorum (Persian stone-cress).